The primary structure comprises 422 residues: Mannose-1-phosphate guanylyltransferase regulatory subunit alpha-A (422 aa).

The segment at 2–253 (LKAVILIGGP…DRFWSQIKSA (252 aa)) is substrate-binding domain. Glu-85 and Gln-249 together coordinate GDP-alpha-D-mannose. The tract at residues 275–422 (LATNTEGGAK…NRSFKNQIIL (148 aa)) is hexapeptide repeat domain. Residues 358 to 386 (TPSDPNPNDPYAKIDSETLFRDGKLTPSI) are C-loop.

It belongs to the transferase hexapeptide repeat family. As to quaternary structure, component of the GMPPA-GMPPB mannose-1-phosphate guanylyltransferase complex composed of 4 gmppa subunits and 8 gmppb subunits; the complex is organized into three layers, a central layer made up of 2 gmppa dimers sandwiched between two layers each made up of 2 gmppb dimers.

It participates in nucleotide-sugar biosynthesis; GDP-alpha-D-mannose biosynthesis; GDP-alpha-D-mannose from alpha-D-mannose 1-phosphate (GTP route): step 1/1. Functionally, regulatory subunit of the GMPPA-GMPPB mannose-1-phosphate guanylyltransferase complex; reduces the catalytic activity of GMPPB when part of the complex. Mediates allosteric feedback inhibition of GMPPB catalytic activity upon binding GDP-alpha-D-mannose. Together with GMPPB regulates GDP-alpha-D-mannose levels. One of two paralogs (gmppaa and gmppab) that may have redundant functions. In Danio rerio (Zebrafish), this protein is Mannose-1-phosphate guanylyltransferase regulatory subunit alpha-A (gmppaa).